The chain runs to 66 residues: Large ribosomal subunit protein bL35 (66 aa).

The tract at residues 1 to 26 (MPKQKTHRGAAKRFKKTGSGKLKRSH) is disordered.

Belongs to the bacterial ribosomal protein bL35 family.

This chain is Large ribosomal subunit protein bL35, found in Bacillus anthracis.